We begin with the raw amino-acid sequence, 431 residues long: Pheromone alpha factor receptor (431 aa).

The Extracellular segment spans residues methionine 1 to valine 49. Residues asparagine 25 and asparagine 32 are each glycosylated (N-linked (GlcNAc...) asparagine). Residues threonine 50–threonine 72 traverse the membrane as a helical segment. The short motif at isoleucine 53–alanine 61 is the Glycine zipper motif element. Residues serine 73–threonine 78 lie on the Cytoplasmic side of the membrane. The helical transmembrane segment at proline 79–leucine 102 threads the bilayer. The Extracellular portion of the chain corresponds to leucine 103–asparagine 132. The chain crosses the membrane as a helical span at residues isoleucine 133–glycine 156. At aspartate 157–glycine 163 the chain is on the cytoplasmic side. The chain crosses the membrane as a helical span at residues leucine 164 to glycine 188. At methionine 189–asparagine 205 the chain is on the extracellular side. A helical transmembrane segment spans residues alanine 206 to isoleucine 230. Topologically, residues arginine 231–phenylalanine 241 are cytoplasmic. A helical transmembrane segment spans residues aspartate 242 to tyrosine 266. Residues serine 267–aspartate 275 are Extracellular-facing. A helical transmembrane segment spans residues valine 276–alanine 299. Over asparagine 300–leucine 431 the chain is Cytoplasmic. A phosphoserine mark is found at serine 310 and serine 315. Threonine 329 is subject to Phosphothreonine. Serine 331 carries the post-translational modification Phosphoserine. Lysine 337 participates in a covalent cross-link: Glycyl lysine isopeptide (Lys-Gly) (interchain with G-Cter in ubiquitin). At serine 360 the chain carries Phosphoserine. The residue at position 363 (threonine 363) is a Phosphothreonine. Serine 366 is modified (phosphoserine). Residue lysine 374 forms a Glycyl lysine isopeptide (Lys-Gly) (interchain with G-Cter in ubiquitin) linkage. Positions glutamine 379 to threonine 389 are enriched in polar residues. The interval glutamine 379 to proline 406 is disordered. Threonine 382 is modified (phosphothreonine). Serine 385 and serine 386 each carry phosphoserine. Lysine 400 is covalently cross-linked (Glycyl lysine isopeptide (Lys-Gly) (interchain with G-Cter in ubiquitin)). Threonine 411 and threonine 414 each carry phosphothreonine. Residue lysine 422 forms a Glycyl lysine isopeptide (Lys-Gly) (interchain with G-Cter in ubiquitin) linkage.

This sequence belongs to the G-protein coupled receptor 4 family. Homodimer. Might also for higher order homooligomers such as homotetramers. Oligomerization is mediated significantly by transmembrane domain 1 (TMD1), possibly in concert with the N-terminal extracellular domain and TMD2. Interaction with GPA1, its dedicated G-alpha protein. In terms of processing, undergoes hyperphosphorylation of the C-terminal cytoplasmic domain after binding of the alpha-factor, which leads to internalization by endocytosis. Post-translationally, monoubiquitination at Lys-337 triggers internalization of STE2. N-glycosylated. N-glycosylation may be involved in the sorting process for misfolded STE2 protein. Expressed in MATa strains but not in MATalpha strains.

The protein localises to the cell membrane. Fungal class D1 G-protein-coupled receptor that acts as an alpha-factor pheromone receptor performing pheromone-dependent signal transduction involved in cellular conjugation, mating projection assembly, and in cell fusion. Following alpha-factor-binding, the signal is transmitted via a tripartite G protein consisting of alpha-, beta- and gamma-subunits (GAP1, STE4 and STE8 respectively) that prepares the cell for conjugation. In the inactive state, the cytoplasmic end of transmembrane domain 7 (TMD7) is unstructured and packs between TMD1-6, blocking the G protein coupling site. Agonist binding results in the outward movement of the extracellular ends of TMD6 and TMD7 by 6 Angstroms. On the intracellular surface, the G protein coupling site is formed by a 20 Angstroms outward movement of the unstructured region in TMD7 that unblocks the site, and a 12 Angstroms inward movement of TMD6. The protein is Pheromone alpha factor receptor (STE2) of Saccharomyces cerevisiae (strain ATCC 204508 / S288c) (Baker's yeast).